The primary structure comprises 423 residues: MPRSFLVKSKKAHSYHQPRSPGPDYSLRLETVPVPGRADGGAVSAGESKMEPRERLSPESQLTEAPDRASASPNSCEGSVCDPSSEFEDYWRPPSPSVSPASEKSLCRSLDEAQPYTLPFKPYAWSGLAGSDLRHLVQSYRQCSALERSAGLSLFCERGAESGRPAARYGSEQAAGGAGAGQPGSCGAASGATSAGGLGLYGDFAPAAAGLFERPSTAAGRLYQDRGHELHADKSVGVKVESELLCTRLLLGGGSYKCIKCSKVFSTPHGLEVHVRRSHSGTRPFACEMCGKTFGHAVSLEQHKAVHSQERSFDCKICGKSFKRSSTLSTHLLIHSDTRPYPCQYCGKRFHQKSDMKKHTFIHTGEKPHKCQVCGKAFSQSSNLITHSRKHTGFKPFGCDLCGKGFQRKVDLRRHRETQHGLK.

The SNAG domain stretch occupies residues Met-1–Ser-20. A disordered region spans residues Met-1 to Ser-102. Phosphoserine is present on residues Ser-20 and Ser-57. Residues Ser-48–Ser-57 show a composition bias toward basic and acidic residues. Residues Arg-141–Cys-258 are required for interaction with RELA. 6 C2H2-type zinc fingers span residues Tyr-256–His-279, Phe-285–His-307, Phe-313–His-335, Tyr-341–His-363, His-369–His-391, and Phe-397–His-420.

In terms of assembly, interacts with U2AF1L4. Component of RCOR-GFI-KDM1A-HDAC complexes. Interacts directly with RCOR1, KDM1A and HDAC2. Also interacts with HDAC1. regions. Interacts (via the zinc-finger domain) with ARIH2; the interaction prevents GFI1 ubiquitination and proteasomal degradation. Interacts with PIAS3; the interaction relieves the inhibitory effect of PIAS3 on STAT3-mediated transcriptional activity. Forms a complex with EHMT2 and HDAC1 to promote 'Lys-9' dimethylation of H3 (H3K9Me2) and repress expression of target genes. Interacts directly with EHMT2. Component of the GFI1-AJUBA-HDAC1 repressor complex. Interacts directly with AJUBA (via ITS LIM domains); the interaction results in the HDAC-dependent corepression of a subset of GFI1 target genes and, occurs independent of the SNAG domain. Interacts with SPI1; the interaction inhibits SPI1 transcriptional activity targeted at macrophage-specific genes, repressing macrophage differentiation of myeloid progenitor cells and promoting granulocyte commitment. Interacts with RUNX1T1; the interaction represses HDAC-mediated transcriptional activity. Interacts with RELA; the interaction occurs on liposaccharide (LPS) stimulation controls RELA DNA binding activity and regulates endotoxin-mediated TOLL-like receptor inflammatory response. Interacts (via the C-terminal zinc fingers) with ZBTB17; the interaction results in the recruitment of GFI1 to the CDKN1A/p21 promoter and repression of CDKN1A/p21 transcription. Ubiquitinated. In terms of tissue distribution, restricted to lymphoid tissues and testes in adult animals.

Its subcellular location is the nucleus. In terms of biological role, transcription repressor essential for hematopoiesis. Functions in a cell-context and development-specific manner. Binds to 5'-TAAATCAC[AT]GCA-3' in the promoter region of a large number of genes. Component of several complexes, including the EHMT2-GFI1-HDAC1, AJUBA-GFI1-HDAC1 and RCOR-GFI-KDM1A-HDAC complexes, that suppress, via histone deacetylase (HDAC) recruitment, a number of genes implicated in multilineage blood cell development. Regulates neutrophil differentiation, promotes proliferation of lymphoid cells, and is required for granulocyte development. Inhibits SPI1 transcriptional activity at macrophage-specific genes, repressing macrophage differentiation of myeloid progenitor cells and promoting granulocyte commitment. Mediates, together with U2AF1L4, the alternative splicing of CD45 and controls T-cell receptor signaling. Regulates the endotoxin-mediated Toll-like receptor (TLR) inflammatory response by antagonizing RELA. Cooperates with CBFA2T2 to regulate ITGB1-dependent neurite growth. Controls cell-cycle progression by repressing CDKNIA/p21 transcription in response to TGFB1 via recruitment of GFI1 by ZBTB17 to the CDKNIA/p21 and CDKNIB promoters. Required for the maintenance of inner ear hair cells. In addition to its role in transcription, acts as a substrate adapter for PRMT1 in the DNA damage response: facilitates the recognition of TP53BP1 and MRE11 substrates by PRMT1, promoting their methylation and the DNA damage response. The chain is Zinc finger protein Gfi-1 (Gfi1) from Rattus norvegicus (Rat).